The following is a 155-amino-acid chain: uncharacterized protein (155 aa).

A signal peptide spans 1–23 (MRLMRNLMNALLLGAAASSLAVA). An intrachain disulfide couples cysteine 86 to cysteine 91.

Belongs to the ivy family.

The protein localises to the periplasm. This is an uncharacterized protein from Pseudomonas aeruginosa (strain ATCC 15692 / DSM 22644 / CIP 104116 / JCM 14847 / LMG 12228 / 1C / PRS 101 / PAO1).